Consider the following 455-residue polypeptide: P2X purinoceptor 5 (455 aa).

Over Met1–Arg34 the chain is Cytoplasmic. The helical transmembrane segment at Val35 to Tyr55 threads the bilayer. At Gln56–Gly341 the chain is on the extracellular side. ATP-binding residues include Lys69 and Lys71. A glycan (N-linked (GlcNAc...) asparagine) is linked at Asn77. 3 disulfides stabilise this stretch: Cys118/Cys169, Cys129/Cys152, and Cys135/Cys163. The N-linked (GlcNAc...) asparagine glycan is linked to Asn157. Thr189 lines the ATP pocket. A glycan (N-linked (GlcNAc...) asparagine) is linked at Asn202. 2 disulfides stabilise this stretch: Cys220–Cys229 and Cys263–Cys272. ATP contacts are provided by Asn294, Arg296, and Lys314. A helical transmembrane segment spans residues Ser342–Ile362. The Cytoplasmic portion of the chain corresponds to Arg363–Thr455. Over residues Asn384–Pro401 the composition is skewed to acidic residues. The interval Asn384–Asn422 is disordered. The segment covering Gln412–Asn422 has biased composition (polar residues).

It belongs to the P2X receptor family. In terms of assembly, functional P2XRs are organized as homomeric and heteromeric trimers. Homotrimer. Forms heterotrimer with P2RX1. In terms of tissue distribution, predominantly expressed in heart but are also present in brain, spinal cord and adrenal gland.

It is found in the cell membrane. The enzyme catalyses Na(+)(in) = Na(+)(out). The catalysed reaction is Ca(2+)(in) = Ca(2+)(out). It catalyses the reaction chloride(in) = chloride(out). With respect to regulation, activated by ATP. Slowly desensitizing. Not activated by ATP agonist alpha/beta-methylene-ATP. Highly sensitive to the antagonists suramin and PPADS. Its function is as follows. ATP-gated nonselective transmembrane cation channel. Permeable to potassium, sodium and calcium. Unlike other P2RX receptors, the P2X5 receptor is also permeable to chloride. Acts as an important regulator of inflammatory-related bone loss and osteoclast multinucleation. In Rattus norvegicus (Rat), this protein is P2X purinoceptor 5 (P2rx5).